A 124-amino-acid polypeptide reads, in one-letter code: Putative outer membrane protein TC_0858 (124 aa).

Residues 1–31 (MGKTKKRKQSITLIEMMVVITLIGIISGALA) form the signal peptide.

It localises to the cell outer membrane. The protein is Putative outer membrane protein TC_0858 of Chlamydia muridarum (strain MoPn / Nigg).